A 107-amino-acid polypeptide reads, in one-letter code: Immunoglobulin kappa constant (107 aa).

The Ig-like domain maps to 6–103 (PTVSIFPPSS…STSPIVKSFN (98 aa)). C27 and C87 are joined by a disulfide.

This Mus musculus (Mouse) protein is Immunoglobulin kappa constant.